The following is a 454-amino-acid chain: Cholesterol 7-desaturase nvd (454 aa).

Transmembrane regions (helical) follow at residues V13 to G33 and T47 to W67. The Rieske domain occupies W117 to V221. C158, H160, C178, and H181 together coordinate [2Fe-2S] cluster.

It belongs to the cholesterol 7-desaturase family. [2Fe-2S] cluster is required as a cofactor.

It is found in the membrane. It carries out the reaction cholesterol + NADPH + O2 + H(+) = 7-dehydrocholesterol + NADP(+) + 2 H2O. The catalysed reaction is cholesterol + NADH + O2 + H(+) = 7-dehydrocholesterol + NAD(+) + 2 H2O. The protein operates within steroid hormone biosynthesis; dafachronic acid biosynthesis. Functionally, catalyzes the production of 7-dehydrocholesterol (7-DHC or cholesta-5,7-dien-3beta-ol) by inserting a double bond (desaturating) at the C7-C8 single bond of cholesterol. This reaction is the first step in the synthesis of the steroid hormone Delta(7)-dafachronic acid. The polypeptide is Cholesterol 7-desaturase nvd (nvd) (Xenopus laevis (African clawed frog)).